The sequence spans 399 residues: Phosphoglycerate kinase (399 aa).

Residues 22-24, Arg-38, 61-64, Arg-120, and Arg-153 each bind substrate; these read DFN and HLGR. Residues Lys-204, Glu-326, and 352-355 contribute to the ATP site; that span reads GGDT.

Belongs to the phosphoglycerate kinase family. Monomer.

The protein resides in the cytoplasm. It catalyses the reaction (2R)-3-phosphoglycerate + ATP = (2R)-3-phospho-glyceroyl phosphate + ADP. It participates in carbohydrate degradation; glycolysis; pyruvate from D-glyceraldehyde 3-phosphate: step 2/5. In Citrifermentans bemidjiense (strain ATCC BAA-1014 / DSM 16622 / JCM 12645 / Bem) (Geobacter bemidjiensis), this protein is Phosphoglycerate kinase.